We begin with the raw amino-acid sequence, 221 residues long: Octanoyltransferase (221 aa).

A BPL/LPL catalytic domain is found at 31 to 213 (DKSADEIWLV…HFVTILGYNK (183 aa)). Residues 70 to 77 (RGGQITYH), 142 to 144 (SLG), and 155 to 157 (GLA) contribute to the substrate site. Catalysis depends on cysteine 173, which acts as the Acyl-thioester intermediate.

It belongs to the LipB family.

It localises to the cytoplasm. It carries out the reaction octanoyl-[ACP] + L-lysyl-[protein] = N(6)-octanoyl-L-lysyl-[protein] + holo-[ACP] + H(+). It functions in the pathway protein modification; protein lipoylation via endogenous pathway; protein N(6)-(lipoyl)lysine from octanoyl-[acyl-carrier-protein]: step 1/2. In terms of biological role, catalyzes the transfer of endogenously produced octanoic acid from octanoyl-acyl-carrier-protein onto the lipoyl domains of lipoate-dependent enzymes. Lipoyl-ACP can also act as a substrate although octanoyl-ACP is likely to be the physiological substrate. This is Octanoyltransferase from Mannheimia succiniciproducens (strain KCTC 0769BP / MBEL55E).